The chain runs to 284 residues: Bifunctional protein FolD (284 aa).

NADP(+) is bound by residues 166–168 and S191; that span reads GRS.

The protein belongs to the tetrahydrofolate dehydrogenase/cyclohydrolase family. Homodimer.

It carries out the reaction (6R)-5,10-methylene-5,6,7,8-tetrahydrofolate + NADP(+) = (6R)-5,10-methenyltetrahydrofolate + NADPH. The enzyme catalyses (6R)-5,10-methenyltetrahydrofolate + H2O = (6R)-10-formyltetrahydrofolate + H(+). It participates in one-carbon metabolism; tetrahydrofolate interconversion. Its function is as follows. Catalyzes the oxidation of 5,10-methylenetetrahydrofolate to 5,10-methenyltetrahydrofolate and then the hydrolysis of 5,10-methenyltetrahydrofolate to 10-formyltetrahydrofolate. This chain is Bifunctional protein FolD, found in Leptospira interrogans serogroup Icterohaemorrhagiae serovar copenhageni (strain Fiocruz L1-130).